The primary structure comprises 175 residues: Gamma-crystallin B (175 aa).

2 consecutive Beta/gamma crystallin 'Greek key' domains span residues 2–40 (GKIT…RVES) and 41–83 (GCWM…HLIP). The segment at 84–88 (PHSGT) is connecting peptide. Beta/gamma crystallin 'Greek key' domains are found at residues 89–129 (YRMK…NVLE) and 130–172 (GSWI…RRVM).

Belongs to the beta/gamma-crystallin family. As to quaternary structure, monomer.

In terms of biological role, crystallins are the dominant structural components of the vertebrate eye lens. The sequence is that of Gamma-crystallin B (CRYGB) from Macaca mulatta (Rhesus macaque).